Consider the following 220-residue polypeptide: Probable chemoreceptor glutamine deamidase CheD 2 (220 aa).

The protein belongs to the CheD family.

It carries out the reaction L-glutaminyl-[protein] + H2O = L-glutamyl-[protein] + NH4(+). Probably deamidates glutamine residues to glutamate on methyl-accepting chemotaxis receptors (MCPs), playing an important role in chemotaxis. The chain is Probable chemoreceptor glutamine deamidase CheD 2 from Methanosarcina acetivorans (strain ATCC 35395 / DSM 2834 / JCM 12185 / C2A).